Here is a 794-residue protein sequence, read N- to C-terminus: Phenylalanine--tRNA ligase beta subunit (794 aa).

Positions 40-158 (NSLNSELILG…LKKYIGSDVK (119 aa)) constitute a tRNA-binding domain. The region spanning 402–477 (KNKQSLEIKL…RLYSYDKIDE (76 aa)) is the B5 domain. Mg(2+) is bound by residues Asp-455, Asp-461, Glu-464, and Glu-465. The 93-residue stretch at 702 to 794 (SKFQSSSRDL…NIKQMKVVIR (93 aa)) folds into the FDX-ACB domain.

This sequence belongs to the phenylalanyl-tRNA synthetase beta subunit family. Type 1 subfamily. As to quaternary structure, tetramer of two alpha and two beta subunits. Requires Mg(2+) as cofactor.

The protein resides in the cytoplasm. The enzyme catalyses tRNA(Phe) + L-phenylalanine + ATP = L-phenylalanyl-tRNA(Phe) + AMP + diphosphate + H(+). This chain is Phenylalanine--tRNA ligase beta subunit, found in Mycoplasma mycoides subsp. mycoides SC (strain CCUG 32753 / NCTC 10114 / PG1).